We begin with the raw amino-acid sequence, 557 residues long: Dihydroxy-acid dehydratase (557 aa).

Aspartate 78 is a Mg(2+) binding site. Cysteine 119 provides a ligand contact to [2Fe-2S] cluster. Residues aspartate 120 and lysine 121 each coordinate Mg(2+). Position 121 is an N6-carboxylysine (lysine 121). Cysteine 192 contributes to the [2Fe-2S] cluster binding site. Position 446 (glutamate 446) interacts with Mg(2+). The active-site Proton acceptor is serine 472.

This sequence belongs to the IlvD/Edd family. In terms of assembly, homodimer. The cofactor is [2Fe-2S] cluster. It depends on Mg(2+) as a cofactor.

It carries out the reaction (2R)-2,3-dihydroxy-3-methylbutanoate = 3-methyl-2-oxobutanoate + H2O. The enzyme catalyses (2R,3R)-2,3-dihydroxy-3-methylpentanoate = (S)-3-methyl-2-oxopentanoate + H2O. It participates in amino-acid biosynthesis; L-isoleucine biosynthesis; L-isoleucine from 2-oxobutanoate: step 3/4. It functions in the pathway amino-acid biosynthesis; L-valine biosynthesis; L-valine from pyruvate: step 3/4. Functions in the biosynthesis of branched-chain amino acids. Catalyzes the dehydration of (2R,3R)-2,3-dihydroxy-3-methylpentanoate (2,3-dihydroxy-3-methylvalerate) into 2-oxo-3-methylpentanoate (2-oxo-3-methylvalerate) and of (2R)-2,3-dihydroxy-3-methylbutanoate (2,3-dihydroxyisovalerate) into 2-oxo-3-methylbutanoate (2-oxoisovalerate), the penultimate precursor to L-isoleucine and L-valine, respectively. The protein is Dihydroxy-acid dehydratase of Campylobacter curvus (strain 525.92).